Here is a 907-residue protein sequence, read N- to C-terminus: Lateral signaling target protein 2 homolog (907 aa).

Disordered stretches follow at residues Ser339–Asn395, Leu463–Ala604, Asn662–Ala688, Glu716–Gly756, and Gly770–Arg834. The segment covering Asp351–Arg361 has biased composition (polar residues). Acidic residues predominate over residues Glu367–Pro393. Polar residues-rich tracts occupy residues Leu463–Leu475 and Pro486–Gln495. A compositionally biased stretch (acidic residues) spans Ser501–Glu516. Basic residues predominate over residues His525–Ser549. The span at Ser550–Ala565 shows a compositional bias: low complexity. A compositionally biased stretch (polar residues) spans Gln568 to Gly580. Gly residues predominate over residues Gly592–Gly602. Polar residues predominate over residues Ala742–Ala751. The span at Gly777–Ser793 shows a compositional bias: low complexity. Over residues Pro816–Gln826 the composition is skewed to polar residues. The segment at Asp845 to Val905 adopts an FYVE-type zinc-finger fold. Cys851, Cys854, Cys867, Cys870, Cys875, Cys878, Cys897, and Cys900 together coordinate Zn(2+).

It belongs to the lst-2 family.

In terms of biological role, negative regulator of epidermal growth factor receptor (EGFR) signaling. The polypeptide is Lateral signaling target protein 2 homolog (Culex quinquefasciatus (Southern house mosquito)).